The chain runs to 921 residues: Isoleucine--tRNA ligase (921 aa).

Positions 59–69 match the 'HIGH' region motif; sequence PYANGHLHIGH. Glu569 is an L-isoleucyl-5'-AMP binding site. A 'KMSKS' region motif is present at residues 610 to 614; sequence KMSKS. Lys613 serves as a coordination point for ATP. The Zn(2+) site is built by Cys896, Cys899, Cys911, and Cys914.

The protein belongs to the class-I aminoacyl-tRNA synthetase family. IleS type 1 subfamily. Monomer. It depends on Zn(2+) as a cofactor.

It localises to the cytoplasm. It catalyses the reaction tRNA(Ile) + L-isoleucine + ATP = L-isoleucyl-tRNA(Ile) + AMP + diphosphate. Functionally, catalyzes the attachment of isoleucine to tRNA(Ile). As IleRS can inadvertently accommodate and process structurally similar amino acids such as valine, to avoid such errors it has two additional distinct tRNA(Ile)-dependent editing activities. One activity is designated as 'pretransfer' editing and involves the hydrolysis of activated Val-AMP. The other activity is designated 'posttransfer' editing and involves deacylation of mischarged Val-tRNA(Ile). The polypeptide is Isoleucine--tRNA ligase (Campylobacter hominis (strain ATCC BAA-381 / DSM 21671 / CCUG 45161 / LMG 19568 / NCTC 13146 / CH001A)).